The following is a 201-amino-acid chain: Ubiquinone biosynthesis accessory factor UbiJ (201 aa).

In terms of domain architecture, SCP2 spans 15-112 (LNTFLYRSPA…QVVQNFVALA (98 aa)).

Belongs to the UbiJ family.

It is found in the cytoplasm. The protein operates within cofactor biosynthesis; ubiquinone biosynthesis. Required for ubiquinone (coenzyme Q) biosynthesis under aerobic conditions. Binds hydrophobic ubiquinone biosynthetic intermediates via its SCP2 domain and is essential for the stability of the Ubi complex. May constitute a docking platform where Ubi enzymes assemble and access their SCP2-bound polyprenyl substrates. Required for intracellular proliferation in macrophages. The sequence is that of Ubiquinone biosynthesis accessory factor UbiJ from Salmonella typhimurium (strain LT2 / SGSC1412 / ATCC 700720).